The sequence spans 286 residues: Dioxygenase trt7 (286 aa).

3 residues coordinate Fe cation: H129, D131, and H206.

Belongs to the PhyH family. Homodimer. Requires Fe cation as cofactor.

It functions in the pathway secondary metabolite biosynthesis; terpenoid biosynthesis. Functionally, dioxygenase; part of the gene cluster that mediates the biosynthesis of terretonin, a fungal meroterpenoid that acts as a mycotoxin. The first step of the pathway is the synthesis of 3,5-dimethylorsellinic acid (DMOA) by the polyketide synthase trt4. DMOA is then prenylated into farnesyl-DMOA by the polyprenyl transferase trt2. Methylation by the methyltransferase trt5 then leads to farnesyl-DMOA methyl ester which is further subject to epoxidation by the FAD-dependent monooxygenase trt8 to yield epoxyfarnesyl-DMOA methyl ester. Cyclization of epoxyfarnesyl-DMOA methyl ester by the terpene cyclase trt1 leads to a tetracycle intermediate which is in turn converted to preterretonin. Dehydrogenase trt9 comes next to transform preterretonin to preterrenoid. The FAD-dependent monooxygenase trt3 is then required for the C-hydroxylation at C16 of preterrenoid to yield terrenoid. The cytochrome P450 trt6 catalyzes three successive oxidations to transform terrenoid into an unstable intermediate, which then undergoes the D-ring expansion and unusual rearrangement of the methoxy group to afford the core skeleton of terretonin. Trt14 catalyzes the D-ring expansion of terretonin involving intramolecular methoxy rearrangement as well as the hydrolysis of the expanded D-ring and the methyl ester moiety. Finally, the nonheme iron-dependent dioxygenase trt7 accomplishes the last two oxidation reactions steps to complete the biosynthesis of terretonin. Terretonin C is produced via spontaneous decarboxylation of the terretonin precursor. Another shunt product of the terretonin biosynthesis is dihydrofarnesyl-DMOA, derived from epoxyfarnesyl-DMOA through hydrolysis of the epoxide. The protein is Dioxygenase trt7 of Aspergillus terreus (strain NIH 2624 / FGSC A1156).